The following is a 119-amino-acid chain: Small ribosomal subunit protein bS6 (119 aa).

The protein belongs to the bacterial ribosomal protein bS6 family.

In terms of biological role, binds together with bS18 to 16S ribosomal RNA. The polypeptide is Small ribosomal subunit protein bS6 (Thermosipho africanus (strain TCF52B)).